The following is a 906-amino-acid chain: Eukaryotic translation initiation factor 3 subunit C (906 aa).

A disordered region spans residues 1 to 22; the sequence is MSRFFANGSDSESESSEEEVQA. Residues 11–20 are compositionally biased toward acidic residues; sequence SESESSEEEV. 4 positions are modified to phosphoserine: Ser34, Ser165, Ser176, and Ser185. Residues 158-283 are disordered; that stretch reads REAPDQESEA…KRPEDDEDGE (126 aa). Residues 162-186 show a composition bias toward acidic residues; the sequence is DQESEAEDEEAAQDSDGGDAGDDSD. Residues 195–209 are compositionally biased toward low complexity; that stretch reads EAAPKVAKTVPAKAA. A compositionally biased stretch (acidic residues) spans 211–237; the sequence is ADDDDSDDSIDWDSDSETETESSDDEN. The segment covering 242–270 has biased composition (basic and acidic residues); the sequence is MRERFLKRTTEKEEKDDDKRKDKRKEQKI. A PCI domain is found at 641–817; that stretch reads FHMHINLELL…ETVVMHRSEP (177 aa). Disordered regions lie at residues 853–873 and 887–906; these read GNMG…NWGG and QRGR…IDEE. Residues 894–906 are compositionally biased toward low complexity; that stretch reads QQQQQQVQTIDEE.

The protein belongs to the eIF-3 subunit C family. Component of the eukaryotic translation initiation factor 3 (eIF-3) complex. The eIF-3 complex interacts with pix.

Its subcellular location is the cytoplasm. Its function is as follows. Component of the eukaryotic translation initiation factor 3 (eIF-3) complex, which is involved in protein synthesis of a specialized repertoire of mRNAs and, together with other initiation factors, stimulates binding of mRNA and methionyl-tRNAi to the 40S ribosome. The eIF-3 complex specifically targets and initiates translation of a subset of mRNAs involved in cell proliferation. This Drosophila ananassae (Fruit fly) protein is Eukaryotic translation initiation factor 3 subunit C.